The primary structure comprises 571 residues: Chaperonin GroEL 1 (571 aa).

ATP is bound by residues 29 to 32 (TLGP), K50, 86 to 90 (DGTTT), G416, and D498.

It belongs to the chaperonin (HSP60) family. In terms of assembly, forms a cylinder of 14 subunits composed of two heptameric rings stacked back-to-back. Interacts with the co-chaperonin GroES.

The protein localises to the cytoplasm. The enzyme catalyses ATP + H2O + a folded polypeptide = ADP + phosphate + an unfolded polypeptide.. Together with its co-chaperonin GroES, plays an essential role in assisting protein folding. The GroEL-GroES system forms a nano-cage that allows encapsulation of the non-native substrate proteins and provides a physical environment optimized to promote and accelerate protein folding. The polypeptide is Chaperonin GroEL 1 (Rhodopirellula baltica (strain DSM 10527 / NCIMB 13988 / SH1)).